The sequence spans 368 residues: tRNA 2-selenouridine synthase (368 aa).

The 125-residue stretch at 12 to 136 (FLGDAPLLDT…MRGFLLETIE (125 aa)) folds into the Rhodanese domain. Cysteine 95 serves as the catalytic S-selanylcysteine intermediate.

Belongs to the SelU family. Monomer.

The enzyme catalyses 5-methylaminomethyl-2-thiouridine(34) in tRNA + selenophosphate + (2E)-geranyl diphosphate + H2O + H(+) = 5-methylaminomethyl-2-selenouridine(34) in tRNA + (2E)-thiogeraniol + phosphate + diphosphate. It catalyses the reaction 5-methylaminomethyl-2-thiouridine(34) in tRNA + (2E)-geranyl diphosphate = 5-methylaminomethyl-S-(2E)-geranyl-thiouridine(34) in tRNA + diphosphate. The catalysed reaction is 5-methylaminomethyl-S-(2E)-geranyl-thiouridine(34) in tRNA + selenophosphate + H(+) = 5-methylaminomethyl-2-(Se-phospho)selenouridine(34) in tRNA + (2E)-thiogeraniol. It carries out the reaction 5-methylaminomethyl-2-(Se-phospho)selenouridine(34) in tRNA + H2O = 5-methylaminomethyl-2-selenouridine(34) in tRNA + phosphate. Involved in the post-transcriptional modification of the uridine at the wobble position (U34) of tRNA(Lys), tRNA(Glu) and tRNA(Gln). Catalyzes the conversion of 2-thiouridine (S2U-RNA) to 2-selenouridine (Se2U-RNA). Acts in a two-step process involving geranylation of 2-thiouridine (S2U) to S-geranyl-2-thiouridine (geS2U) and subsequent selenation of the latter derivative to 2-selenouridine (Se2U) in the tRNA chain. In Bordetella bronchiseptica (strain ATCC BAA-588 / NCTC 13252 / RB50) (Alcaligenes bronchisepticus), this protein is tRNA 2-selenouridine synthase.